The following is a 1094-amino-acid chain: Potassium-transporting ATPase alpha chain 2 (1094 aa).

A compositionally biased stretch (basic and acidic residues) spans 1–21 (MAGGAHRADRATGEERKEGGG). Residues 1-37 (MAGGAHRADRATGEERKEGGGRWRAPHSPSPPGPRGC) are disordered. Positions 28–37 (SPSPPGPRGC) are enriched in pro residues. Residues 56–157 (RYCTLLLFQR…NALTPPKQTP (102 aa)) lie on the Cytoplasmic side of the membrane. Residues 158 to 178 (EIIKFLKQMVGGFSILLWVGA) form a helical membrane-spanning segment. The Lumenal segment spans residues 179–201 (VLCWIAFGIQYVSNPSASLDRVY). Residues 202–222 (LGTVLAVVVILTGIFAYYQEA) form a helical membrane-spanning segment. At 223–358 (KSTNIMASFC…NEKTPIAIEI (136 aa)) the chain is on the cytoplasmic side. A disordered region spans residues 286–305 (SSLTGESEPQSRSSGFTHEN). Residues 359 to 378 (EHFVHIVAGVAVSVGILFFI) traverse the membrane as a helical segment. Topologically, residues 379-390 (IAVCMKYHVLDA) are lumenal. Residues 391–408 (IIFLIAIIVANVPEGLLA) traverse the membrane as a helical segment. At 409–842 (TVTVALSLTA…EEGRLIFDNL (434 aa)) the chain is on the cytoplasmic side. Asp446 (4-aspartylphosphate intermediate) is an active-site residue. Residues Asp787 and Asp791 each coordinate Mg(2+). A helical membrane pass occupies residues 843–862 (KKTIAYTLTKNIAELCPFLI). Residues 863–872 (YIILGLPLPI) are Lumenal-facing. The chain crosses the membrane as a helical span at residues 873–893 (GTITLLFIDLGTDIIPSIALA). Over 894-913 (YEKAESDIMNRKPRHKKKDR) the chain is Cytoplasmic. The chain crosses the membrane as a helical span at residues 914–936 (LVNQQLAVYSYLHIGLMQALGAF). Topologically, residues 937–988 (LVYFTVYAQQGFRPTSLFHLRIAWDSDHLNDLEDNYGQEWTSYQRQYLEWTG) are lumenal. The helical transmembrane segment at 989 to 1008 (YTAFFVGIMVQQIADLIIRK) threads the bilayer. Over 1009-1022 (TRKNSIFKQGLFRN) the chain is Cytoplasmic. At Ser1013 the chain carries Phosphoserine; by PKA. A helical membrane pass occupies residues 1023 to 1041 (KVIWVGIASQIIVALLLSY). Over 1042–1056 (GLGSITALNFTMLKA) the chain is Lumenal. Residues 1057-1077 (QYWFVAVPHAILIWVYDEMRK) traverse the membrane as a helical segment. Over 1078–1094 (LFIRLYPGSWWDKNMYY) the chain is Cytoplasmic.

Belongs to the cation transport ATPase (P-type) (TC 3.A.3) family. Type IIC subfamily. The X(+)/K(+) ATPase pump is composed of a catalytic alpha subunit and an auxiliary non-catalytic beta subunit. The alpha subunit pairs with the beta subunit of gastric H(+)/K(+) ATPase ATP4B or the beta subunit of Na(+)/K(+) ATPases ATP1B1 and ATP1B3; this interaction is required for the formation of a functionally active pump and its targeting at the plasma membrane. In terms of tissue distribution, found in the skin, kidney, distal colon and brain. In the kidney it is found in the connecting tubule, cortical collecting duct and outer medullary collecting duct while in the brain it is specific to choroid plexus and cortex.

The protein localises to the apical cell membrane. The catalysed reaction is K(+)(out) + ATP + H2O + H(+)(in) = K(+)(in) + ADP + phosphate + 2 H(+)(out). It carries out the reaction K(+)(out) + Na(+)(in) + ATP + H2O = K(+)(in) + Na(+)(out) + ADP + phosphate + H(+). Its function is as follows. The catalytic subunit of a H(+)/K(+) ATPase and/or Na(+)/K(+) ATPase pump which transports K(+) ions in exchange for Na(+) and/or H(+) ions across the apical membrane of epithelial cells. Uses ATP as an energy source to pump K(+) ions into the cell while transporting Na(+) and/or H(+) ions to the extracellular compartment. Involved in the maintenance of electrolyte homeostasis through K(+) ion absorption in kidney and colon. In the airway epithelium, may play a primary role in mucus acidification regulating its viscosity and clearance. In Oryctolagus cuniculus (Rabbit), this protein is Potassium-transporting ATPase alpha chain 2 (ATP12A).